Here is a 269-residue protein sequence, read N- to C-terminus: Small ribosomal subunit protein eS1 (269 aa).

2 disordered regions span residues 1 to 20 (MAVGKNKGVSKGGKKGSKKK) and 249 to 269 (AASGVVVDRPEGYEPPVQESV).

It belongs to the eukaryotic ribosomal protein eS1 family. Component of the small ribosomal subunit. Mature ribosomes consist of a small (40S) and a large (60S) subunit. The 40S subunit contains about 33 different proteins and 1 molecule of RNA (18S). The 60S subunit contains about 49 different proteins and 3 molecules of RNA (28S, 5.8S and 5S).

The protein localises to the cytoplasm. This Anopheles darlingi (Mosquito) protein is Small ribosomal subunit protein eS1.